A 192-amino-acid chain; its full sequence is Ras-like GTP-binding protein O-RHO (192 aa).

Residue 12-19 coordinates GTP; the sequence is GDGACGKT. The Effector region motif lies at 34-42; that stretch reads YVPTVFENY. Residues 59 to 63 and 117 to 120 each bind GTP; these read DTAGQ and NKKT. The residue at position 189 (C189) is a Cysteine methyl ester. C189 carries the S-geranylgeranyl cysteine lipid modification. Residues 190–192 constitute a propeptide, removed in mature form; that stretch reads LLL.

This sequence belongs to the small GTPase superfamily. Rho family.

The protein localises to the cell membrane. The polypeptide is Ras-like GTP-binding protein O-RHO (Diplobatis ommata (Ocellated electric ray)).